The sequence spans 194 residues: Dephospho-CoA kinase (194 aa).

The 191-residue stretch at 4-194 (ALGLTGSIGM…HLVSKLTEGT (191 aa)) folds into the DPCK domain. 12–17 (GMGKST) is a binding site for ATP.

The protein belongs to the CoaE family.

It is found in the cytoplasm. It carries out the reaction 3'-dephospho-CoA + ATP = ADP + CoA + H(+). The protein operates within cofactor biosynthesis; coenzyme A biosynthesis; CoA from (R)-pantothenate: step 5/5. Catalyzes the phosphorylation of the 3'-hydroxyl group of dephosphocoenzyme A to form coenzyme A. The polypeptide is Dephospho-CoA kinase (Jannaschia sp. (strain CCS1)).